The primary structure comprises 770 residues: Glutamate carboxypeptidase 2 homolog (770 aa).

Residues 1 to 19 (MPYVGVGAQKASTNLTGGP) lie on the Cytoplasmic side of the membrane. Residues 20-40 (MMKAYAFVLAFFLLGLGVLAL) form a helical; Signal-anchor for type II membrane protein membrane-spanning segment. Topologically, residues 41 to 770 (GKHHSGRRFN…CVVNTLRDVI (730 aa)) are extracellular. N-linked (GlcNAc...) asparagine glycosylation is found at Asn-175 and Asn-337. Positions 282 to 597 (SKKELFKGRT…QYWAELAKTF (316 aa)) are catalytic. Zn(2+) contacts are provided by His-387 and Asp-397. A glycan (N-linked (GlcNAc...) asparagine) is linked at Asn-417. The active-site Nucleophile is the Glu-435. Residues Glu-436 and Asp-464 each contribute to the Zn(2+) site. 2 N-linked (GlcNAc...) asparagine glycosylation sites follow: Asn-469 and Asn-551. His-562 is a Zn(2+) binding site. N-linked (GlcNAc...) asparagine glycans are attached at residues Asn-606 and Asn-630.

Belongs to the peptidase M28 family. M28B subfamily. Zn(2+) serves as cofactor.

It is found in the membrane. The enzyme catalyses Release of an unsubstituted, C-terminal glutamyl residue, typically from Ac-Asp-Glu or folylpoly-gamma-glutamates.. This is Glutamate carboxypeptidase 2 homolog from Caenorhabditis briggsae.